Reading from the N-terminus, the 359-residue chain is MSTENTLSVADLARENVRNLVPYQSARRLGGNGDVWLNANEFPTAVEFQLTQQTLNRYPECQPKAVIENYAQYAGVKPEQVLVSRGADEGIELVIRAFCEPGKDAILYCPPTYGMYSVSAETIGVERRTVPALENWQLDLQGISDNLDGTKVVFVCSPNNPTGQLINPQDLRTLLELTRGKAIVVADEAYIEFCPQATLTGWLVEYPHLVILRTLSKAFALAGLRCGFTLANEEVINLLLKVIAPYPLSTPVADIAAQALSPQGINAMRDRVAQTVQERQYLVNALQQTACVEHVFDSETNYILARFTASSSVFKSLWDQGIILRDQNKQPSLSGCLRITVGTRQENQRVIDALRAEPV.

Lys217 is subject to N6-(pyridoxal phosphate)lysine.

Belongs to the class-II pyridoxal-phosphate-dependent aminotransferase family. Histidinol-phosphate aminotransferase subfamily. As to quaternary structure, homodimer. Pyridoxal 5'-phosphate serves as cofactor.

The enzyme catalyses L-histidinol phosphate + 2-oxoglutarate = 3-(imidazol-4-yl)-2-oxopropyl phosphate + L-glutamate. It functions in the pathway amino-acid biosynthesis; L-histidine biosynthesis; L-histidine from 5-phospho-alpha-D-ribose 1-diphosphate: step 7/9. This chain is Histidinol-phosphate aminotransferase, found in Salmonella enteritidis PT4 (strain P125109).